The chain runs to 158 residues: 2-C-methyl-D-erythritol 2,4-cyclodiphosphate synthase (158 aa).

Residues Asp9 and His11 each coordinate a divalent metal cation. 4-CDP-2-C-methyl-D-erythritol 2-phosphate contacts are provided by residues 9 to 11 (DAH) and 35 to 36 (HS). Residue His43 coordinates a divalent metal cation. 4-CDP-2-C-methyl-D-erythritol 2-phosphate is bound by residues 57 to 59 (DIG), 62 to 66 (FPDTD), 133 to 136 (TTTE), Phe140, and Arg143.

Belongs to the IspF family. Homotrimer. Requires a divalent metal cation as cofactor.

It carries out the reaction 4-CDP-2-C-methyl-D-erythritol 2-phosphate = 2-C-methyl-D-erythritol 2,4-cyclic diphosphate + CMP. It participates in isoprenoid biosynthesis; isopentenyl diphosphate biosynthesis via DXP pathway; isopentenyl diphosphate from 1-deoxy-D-xylulose 5-phosphate: step 4/6. Its function is as follows. Involved in the biosynthesis of isopentenyl diphosphate (IPP) and dimethylallyl diphosphate (DMAPP), two major building blocks of isoprenoid compounds. Catalyzes the conversion of 4-diphosphocytidyl-2-C-methyl-D-erythritol 2-phosphate (CDP-ME2P) to 2-C-methyl-D-erythritol 2,4-cyclodiphosphate (ME-CPP) with a corresponding release of cytidine 5-monophosphate (CMP). The protein is 2-C-methyl-D-erythritol 2,4-cyclodiphosphate synthase of Methylococcus capsulatus (strain ATCC 33009 / NCIMB 11132 / Bath).